Consider the following 347-residue polypeptide: Dihydroorotate dehydrogenase (quinone) (347 aa).

FMN contacts are provided by residues 62-66 (AGLDK) and Thr-86. Lys-66 is a substrate binding site. Residue 111-115 (NRMGF) participates in substrate binding. The FMN site is built by Asn-142 and Asn-175. Asn-175 is a substrate binding site. Ser-178 acts as the Nucleophile in catalysis. Asn-180 is a binding site for substrate. The FMN site is built by Lys-220 and Thr-248. 249-250 (NT) serves as a coordination point for substrate. FMN-binding positions include Gly-271, Gly-300, and 321-322 (YS).

It belongs to the dihydroorotate dehydrogenase family. Type 2 subfamily. Monomer. FMN serves as cofactor.

Its subcellular location is the cell membrane. It catalyses the reaction (S)-dihydroorotate + a quinone = orotate + a quinol. Its pathway is pyrimidine metabolism; UMP biosynthesis via de novo pathway; orotate from (S)-dihydroorotate (quinone route): step 1/1. In terms of biological role, catalyzes the conversion of dihydroorotate to orotate with quinone as electron acceptor. This is Dihydroorotate dehydrogenase (quinone) from Dechloromonas aromatica (strain RCB).